The sequence spans 100 residues: Urease subunit gamma (100 aa).

The protein belongs to the urease gamma subunit family. As to quaternary structure, heterotrimer of UreA (gamma), UreB (beta) and UreC (alpha) subunits. Three heterotrimers associate to form the active enzyme.

The protein localises to the cytoplasm. The enzyme catalyses urea + 2 H2O + H(+) = hydrogencarbonate + 2 NH4(+). The protein operates within nitrogen metabolism; urea degradation; CO(2) and NH(3) from urea (urease route): step 1/1. The chain is Urease subunit gamma from Staphylococcus aureus (strain N315).